Reading from the N-terminus, the 338-residue chain is Mitochondrial glutathione transporter SLC25A40 (338 aa).

3 Solcar repeats span residues Val13–Leu131, Asn139–Trp223, and Pro233–Phe327. Transmembrane regions (helical) follow at residues Met19 to Val39, Leu103 to Thr123, Ile145 to Ile165, Trp199 to Leu220, Phe239 to Val259, and Gly298 to Ile318.

It belongs to the mitochondrial carrier (TC 2.A.29) family.

It is found in the mitochondrion inner membrane. The catalysed reaction is glutathione(in) = glutathione(out). Functionally, probable mitochondrial transporter required for glutathione import into mitochondria. Glutathione, which plays key roles in oxidative metabolism, is produced exclusively in the cytosol and is imported in many organelles. Mitochondrial glutathione is required for the activity and stability of proteins containing iron-sulfur clusters, as well as erythropoiesis. The chain is Mitochondrial glutathione transporter SLC25A40 from Bos taurus (Bovine).